Here is a 216-residue protein sequence, read N- to C-terminus: Ribose-5-phosphate isomerase A (216 aa).

Substrate contacts are provided by residues T26–T29, D79–D82, and K92–G95. The active-site Proton acceptor is the E101. Substrate is bound at residue K119.

This sequence belongs to the ribose 5-phosphate isomerase family. As to quaternary structure, homodimer.

It catalyses the reaction aldehydo-D-ribose 5-phosphate = D-ribulose 5-phosphate. It functions in the pathway carbohydrate degradation; pentose phosphate pathway; D-ribose 5-phosphate from D-ribulose 5-phosphate (non-oxidative stage): step 1/1. In terms of biological role, catalyzes the reversible conversion of ribose-5-phosphate to ribulose 5-phosphate. The sequence is that of Ribose-5-phosphate isomerase A from Legionella pneumophila (strain Paris).